Reading from the N-terminus, the 190-residue chain is MASFSTNEFKSGLKVMLDGNPCAILENEFVKPGKGQAFNRVKLRNLRSGKVLEQTFKSGDSLEAADVMDTEMNYLYNDGEFWHFMHPESFEQIQADKTAMSDSIKWLKENSNALCTITLFNGAPLSVTPPNFVELQITETDPGVRGDTSGGGGKPATLETGAVVRVPLFVQQGEVVRVDTRTGDYQTRVS.

An N6-(3,6-diaminohexanoyl)-5-hydroxylysine modification is found at lysine 34.

It belongs to the elongation factor P family. Post-translationally, may be beta-lysylated on the epsilon-amino group of Lys-34 by the combined action of EpmA and EpmB, and then hydroxylated on the C5 position of the same residue by EpmC (if this protein is present). Lysylation is critical for the stimulatory effect of EF-P on peptide-bond formation. The lysylation moiety may extend toward the peptidyltransferase center and stabilize the terminal 3-CCA end of the tRNA. Hydroxylation of the C5 position on Lys-34 may allow additional potential stabilizing hydrogen-bond interactions with the P-tRNA.

The protein resides in the cytoplasm. Its pathway is protein biosynthesis; polypeptide chain elongation. Functionally, involved in peptide bond synthesis. Alleviates ribosome stalling that occurs when 3 or more consecutive Pro residues or the sequence PPG is present in a protein, possibly by augmenting the peptidyl transferase activity of the ribosome. Modification of Lys-34 is required for alleviation. The polypeptide is Elongation factor P (Psychrobacter cryohalolentis (strain ATCC BAA-1226 / DSM 17306 / VKM B-2378 / K5)).